We begin with the raw amino-acid sequence, 65 residues long: Large ribosomal subunit protein bL35 (65 aa).

The protein belongs to the bacterial ribosomal protein bL35 family.

The chain is Large ribosomal subunit protein bL35 from Buchnera aphidicola subsp. Acyrthosiphon pisum (strain 5A).